We begin with the raw amino-acid sequence, 457 residues long: UDP-N-acetylmuramoylalanine--D-glutamate ligase (457 aa).

117 to 123 (GTNGKST) is a binding site for ATP.

It belongs to the MurCDEF family.

It is found in the cytoplasm. It carries out the reaction UDP-N-acetyl-alpha-D-muramoyl-L-alanine + D-glutamate + ATP = UDP-N-acetyl-alpha-D-muramoyl-L-alanyl-D-glutamate + ADP + phosphate + H(+). It participates in cell wall biogenesis; peptidoglycan biosynthesis. Its function is as follows. Cell wall formation. Catalyzes the addition of glutamate to the nucleotide precursor UDP-N-acetylmuramoyl-L-alanine (UMA). The polypeptide is UDP-N-acetylmuramoylalanine--D-glutamate ligase (Paramagnetospirillum magneticum (strain ATCC 700264 / AMB-1) (Magnetospirillum magneticum)).